A 385-amino-acid polypeptide reads, in one-letter code: UDP-4-amino-4-deoxy-L-arabinose--oxoglutarate aminotransferase (385 aa).

The Proton acceptor role is filled by K188. Position 188 is an N6-(pyridoxal phosphate)lysine (K188).

This sequence belongs to the DegT/DnrJ/EryC1 family. ArnB subfamily. In terms of assembly, homodimer. The cofactor is pyridoxal 5'-phosphate.

The catalysed reaction is UDP-4-amino-4-deoxy-beta-L-arabinose + 2-oxoglutarate = UDP-beta-L-threo-pentopyranos-4-ulose + L-glutamate. It functions in the pathway nucleotide-sugar biosynthesis; UDP-4-deoxy-4-formamido-beta-L-arabinose biosynthesis; UDP-4-deoxy-4-formamido-beta-L-arabinose from UDP-alpha-D-glucuronate: step 2/3. The protein operates within bacterial outer membrane biogenesis; lipopolysaccharide biosynthesis. Its activity is regulated as follows. Inhibited by L-cycloserine. Catalyzes the conversion of UDP-4-keto-arabinose (UDP-Ara4O) to UDP-4-amino-4-deoxy-L-arabinose (UDP-L-Ara4N). The modified arabinose is attached to lipid A and is required for resistance to polymyxin and cationic antimicrobial peptides. The sequence is that of UDP-4-amino-4-deoxy-L-arabinose--oxoglutarate aminotransferase (arnB) from Salmonella typhimurium (strain LT2 / SGSC1412 / ATCC 700720).